The sequence spans 87 residues: Large ribosomal subunit protein eL33 (87 aa).

The protein belongs to the eukaryotic ribosomal protein eL33 family.

The protein is Large ribosomal subunit protein eL33 of Pyrococcus horikoshii (strain ATCC 700860 / DSM 12428 / JCM 9974 / NBRC 100139 / OT-3).